The chain runs to 275 residues: Adenylate kinase (275 aa).

Residue 54–59 participates in ATP binding; that stretch reads GAGKGT. Positions 74–103 are NMP; sequence ATGDMLRSQVAKKTPLGREAKKIMDQGGLV. Residues T75, R80, 101–103, 130–133, and Q137 each bind AMP; these read GLV and GFPR. Residues 171–208 form an LID region; sequence GRLVHPASGRSYHRVFNPPKADMKDDITGEPLVSRSDD. ATP is bound by residues R172 and 181–182; that span reads SY. AMP contacts are provided by R205 and R216. ATP is bound at residue Q244.

It belongs to the adenylate kinase family. AK2 subfamily. As to quaternary structure, monomer.

It is found in the cytoplasm. Its subcellular location is the cytosol. It localises to the mitochondrion intermembrane space. The catalysed reaction is AMP + ATP = 2 ADP. Its function is as follows. Catalyzes the reversible transfer of the terminal phosphate group between ATP and AMP. Plays an important role in cellular energy homeostasis and in adenine nucleotide metabolism. Adenylate kinase activity is critical for regulation of the phosphate utilization and the AMP de novo biosynthesis pathways. The polypeptide is Adenylate kinase (adk1) (Botryotinia fuckeliana (strain B05.10) (Noble rot fungus)).